Reading from the N-terminus, the 249-residue chain is Histone H1 (249 aa).

2 stretches are compositionally biased toward low complexity: residues 1–19 and 27–43; these read MSDS…QTAS and KKPA…TTAP. 2 disordered regions span residues 1–53 and 105–249; these read MSDS…QQMV and QTKG…ATKK. The 75-residue stretch at 45–119 folds into the H15 domain; the sequence is THPPTQQMVD…GASGSFKLSA (75 aa). Residues 121-134 are compositionally biased toward basic and acidic residues; it reads SKKEPKPKVSSVEK. Residues 146-158 are compositionally biased toward basic residues; it reads AKKKTISATKKPK. The span at 173–190 shows a compositional bias: basic and acidic residues; that stretch reads KSVDKKKAEKAKAKDAKK. Low complexity predominate over residues 195-233; sequence KAKPTTAKAKSSAAKPKTPKPKTTSAKPKKVVAAASPKK. Basic residues predominate over residues 234–249; it reads AAAKKPKAKTASATKK.

It belongs to the histone H1/H5 family.

It is found in the nucleus. It localises to the chromosome. Functionally, histones H1 are necessary for the condensation of nucleosome chains into higher-order structures. This chain is Histone H1 (His1), found in Drosophila hydei (Fruit fly).